Reading from the N-terminus, the 366-residue chain is MSHNTFGHLFRVTTFGESHGVALGCVVDGCPPGLALEADEIQAELDRRKPGQSRFTTQRREPDQVKILSGVFSDDRTGGRQLTTGTPIALMIENTDQRSKDYSEIRDSYRPGHADFTYDAKYGIRDYRGGGRSSARETAARVAAGAVARKVIPGITIRAALVQMGPHAIDRTNWDWEQVGQNPFFCPDAKAAALYETYLDEIRKDGSSVGAVIEVVAEGVPPGLGAPIYGKLDADLAAAMMSINAVKGVEIGDGFAAAALRGEDNADEMRAGNDGRPRFLANHAGGILGGISSGEPVVVRFAVKPTSSILTPRQSVNRDGAEIDLITKGRHDPCVGIRAVPVAEAMMACVLADHTLRHRGQNGERP.

NADP(+) is bound by residues arginine 48 and arginine 54. Residues 132–134 (RSS), 244–245 (NA), glycine 289, 304–308 (KPTSS), and arginine 330 contribute to the FMN site.

Belongs to the chorismate synthase family. Homotetramer. The cofactor is FMNH2.

It catalyses the reaction 5-O-(1-carboxyvinyl)-3-phosphoshikimate = chorismate + phosphate. The protein operates within metabolic intermediate biosynthesis; chorismate biosynthesis; chorismate from D-erythrose 4-phosphate and phosphoenolpyruvate: step 7/7. Catalyzes the anti-1,4-elimination of the C-3 phosphate and the C-6 proR hydrogen from 5-enolpyruvylshikimate-3-phosphate (EPSP) to yield chorismate, which is the branch point compound that serves as the starting substrate for the three terminal pathways of aromatic amino acid biosynthesis. This reaction introduces a second double bond into the aromatic ring system. In Methylorubrum extorquens (strain PA1) (Methylobacterium extorquens), this protein is Chorismate synthase.